A 616-amino-acid chain; its full sequence is MSDLNQSKKMNVSEFADAQRSHYTVYPSLPQSNKNDKHIPFVKLLSGKESEVNVEKRWELYHQLHSHFHDQVDHIIDNIEADLKAEISDLLYSETTQKRRCFNTIFLLGSDSTTKIELKDESSRYNVLIELTPKESPNVRMMLRRSMYKLYSAADAEEHPTIKYEDINDEDGDFTEQNNDVSYDLSLVENFKRLFGKDLAMVFNFKDVDSINFNTLDNFIILLKSAFKYDHVKISLIFNINTNLSNIEKNLRQSTIRLLKRNYHKLDVSSNKGFKYGNQIFQSFLDTVDGKLNLSDRFVEFILSKMANNTNHNLQLLTKMLDYSLMSYFFQNAFSVFIDPVNVDFLNDDYLKILSRCPTFMFFVEGLIKQHAPADEILSLLTNKNRGLEEFFVEFLVRENPINGHAKFVARFLEEELNITNFNLIELYHNLLIGKLDSYLDRWSACKEYKDRLHFEPIDTIFQELFTLDNRSGLLTQSIFPSYKSNIEDNLLSWEQVLPSLDKENYDTLSGDLDKIMAPVLGQLFKLYREANMTINIYDFYIAFRETLPKEEILNFIRKDPSNTKLLELAETPDAFDKVALILFMQAIFAFENMGLIKFQSTKSYDLVEKCVWRGI.

At Ser2 the chain carries N-acetylserine.

It belongs to the ORC3 family. In terms of assembly, component of the origin recognition complex (ORC) composed of at least ORC1, ORC2, ORC3, ORC4, ORC5 and ORC6. Interacts with ORC6.

It is found in the nucleus. Component of the origin recognition complex (ORC) that binds origins of replication. It has a role in both chromosomal replication and mating type transcriptional silencing. Binds to the ARS consensus sequence (ACS) of origins of replication. This is Origin recognition complex subunit 3 (ORC3) from Saccharomyces cerevisiae (strain ATCC 204508 / S288c) (Baker's yeast).